The sequence spans 204 residues: uncharacterized protein (204 aa).

The interval 47-108 is disordered; that stretch reads TDSSDDEGGA…EDSDEEGEGG (62 aa). The segment covering 49-106 has biased composition (acidic residues); that stretch reads SSDDEGGASSGDEGEASSDDEGDASSDDEEEASSDGEGVVEDEETLDAEGEDSDEEGE.

It localises to the mitochondrion. This is an uncharacterized protein from Paramecium tetraurelia.